A 243-amino-acid chain; its full sequence is Probable transcriptional regulatory protein LGAS_1276 (243 aa).

Residues 1–22 are disordered; it reads MSGHSKWHNIQGRKNAQDAKRG.

Belongs to the TACO1 family.

Its subcellular location is the cytoplasm. This chain is Probable transcriptional regulatory protein LGAS_1276, found in Lactobacillus gasseri (strain ATCC 33323 / DSM 20243 / BCRC 14619 / CIP 102991 / JCM 1131 / KCTC 3163 / NCIMB 11718 / NCTC 13722 / AM63).